Here is a 539-residue protein sequence, read N- to C-terminus: 2,3-bisphosphoglycerate-independent phosphoglycerate mutase (539 aa).

Residues Asp37 and Ser86 each coordinate Mn(2+). Residue Ser86 is part of the active site. Substrate contacts are provided by residues His147, 177 to 178 (RD), Arg210, Arg216, 284 to 287 (RADR), and Lys359. Mn(2+) contacts are provided by Asp426, His430, Asp467, His468, and His485.

The protein belongs to the BPG-independent phosphoglycerate mutase family. Requires Mg(2+) as cofactor. It depends on Mn(2+) as a cofactor. Expressed ubiquitously. High expression levels in the nerve ring region, intestine and body wall muscles.

The catalysed reaction is (2R)-2-phosphoglycerate = (2R)-3-phosphoglycerate. It functions in the pathway carbohydrate degradation; glycolysis; pyruvate from D-glyceraldehyde 3-phosphate: step 3/5. Activity is not affected by 2,3-bisphosphoglycerate. In terms of biological role, catalyzes the interconversion of 2-phosphoglycerate and 3-phosphoglycerate. The protein is 2,3-bisphosphoglycerate-independent phosphoglycerate mutase of Caenorhabditis elegans.